The following is a 109-amino-acid chain: Large ribosomal subunit protein uL22 (109 aa).

This sequence belongs to the universal ribosomal protein uL22 family. Part of the 50S ribosomal subunit.

This protein binds specifically to 23S rRNA; its binding is stimulated by other ribosomal proteins, e.g. L4, L17, and L20. It is important during the early stages of 50S assembly. It makes multiple contacts with different domains of the 23S rRNA in the assembled 50S subunit and ribosome. Its function is as follows. The globular domain of the protein is located near the polypeptide exit tunnel on the outside of the subunit, while an extended beta-hairpin is found that lines the wall of the exit tunnel in the center of the 70S ribosome. The chain is Large ribosomal subunit protein uL22 from Methylobacillus flagellatus (strain ATCC 51484 / DSM 6875 / VKM B-1610 / KT).